The chain runs to 308 residues: Adipolin (308 aa).

An N-terminal signal peptide occupies residues 1-21; the sequence is MWAWGWAAAALLWLQTAGAGA. A disordered region spans residues 36 to 119; it reads DSPNITTSNR…PPGSPGVGVT (84 aa). N-linked (GlcNAc...) asparagine glycosylation is present at N39. The span at 82 to 93 shows a compositional bias: basic residues; the sequence is RKRCRGRDKKSR. The span at 99 to 113 shows a compositional bias: pro residues; it reads PGPPGPPGPPGPPGS. In terms of domain architecture, C1q spans 153 to 308; it reads QRLVVEAFYC…SSFSGMLLGT (156 aa).

Belongs to the adipolin/erythroferrone family. Homomultimer; disulfide-linked. Adipolin fC1QTNF12: homotrimer; disulfide-linked. Adipolin gC1QTNF12: homodimer; disulfide-linked. May interact with ERFE. Processed into Adipolin fC1QTNF12 and Adipolin gC1QTNF12 by FURIN. Insulin enhances endogenous C1QTNF12 cleavage. As to expression, widely expressed, with high expression in subcutaneous and epididymal white adipose tissues and brown adipose tissue. Expressed in adipocytes (at protein level).

The protein resides in the secreted. Its function is as follows. Insulin-sensitizing adipocyte-secreted protein (adipokine) that regulates glucose metabolism in liver and adipose tissue. Promotes glucose uptake in adipocytes and suppresses de novo glucose production in hepatocytes via the PI3K-Akt signaling pathway. Administration lead to reduction of blood glucose. Able to attenuate inflammation in fat tissue. Functionally, acts by activating the Akt signaling in hepatocytes and adipocytes. Not able to increase insulin-stimulated glucose uptake in adipocytes. Acts by activating the MAP kinase. Increases insulin-stimulated glucose uptake in adipocytes. This is Adipolin (C1qtnf12) from Mus musculus (Mouse).